The following is a 181-amino-acid chain: Oligoribonuclease (181 aa).

The region spanning 8 to 171 (LIWVDLEMTG…DDIRESIAEL (164 aa)) is the Exonuclease domain. Y129 is a catalytic residue.

The protein belongs to the oligoribonuclease family.

It localises to the cytoplasm. 3'-to-5' exoribonuclease specific for small oligoribonucleotides. The chain is Oligoribonuclease from Vibrio parahaemolyticus serotype O3:K6 (strain RIMD 2210633).